The following is a 139-amino-acid chain: Actin-depolymerizing factor 3 (139 aa).

The ADF-H domain maps to alanine 5–asparagine 139. Serine 6 carries the post-translational modification Phosphoserine.

Belongs to the actin-binding proteins ADF family.

The protein localises to the cytoplasm. It localises to the cytoskeleton. Actin-depolymerizing protein. Severs actin filaments (F-actin) and binds to actin monomers. This Arabidopsis thaliana (Mouse-ear cress) protein is Actin-depolymerizing factor 3 (ADF3).